The sequence spans 243 residues: HTH-type transcriptional regulator MlrA (243 aa).

In terms of domain architecture, HTH merR-type spans Leu-3 to Ser-72. Positions Ile-6–Arg-25 form a DNA-binding region, H-T-H motif.

Its function is as follows. Transcriptional activator of csgD, which is required for production of the curli (AgF). This Salmonella typhimurium (strain SL1344) protein is HTH-type transcriptional regulator MlrA.